Reading from the N-terminus, the 595-residue chain is Indole-3-acetic acid-amido synthetase GH3.3 (595 aa).

Belongs to the IAA-amido conjugating enzyme family.

Functionally, catalyzes the synthesis of indole-3-acetic acid (IAA)-amino acid conjugates, providing a mechanism for the plant to cope with the presence of excess auxin. Strongly reactive with Glu, Gln, Trp, Asp, Ala, Leu, Phe, Gly, Tyr, Met, Ile and Val. Little or no product formation with His, Ser, Thr, Arg, Lys, or Cys. Also active on pyruvic and butyric acid analogs of IAA, PAA and the synthetic auxin naphthaleneacetic acid (NAA). The two chlorinated synthetic auxin herbicides 2,4-D and 3,6-dichloro-o-anisic acid (dicamba) cannot be used as substrates. The sequence is that of Indole-3-acetic acid-amido synthetase GH3.3 (GH3.3) from Arabidopsis thaliana (Mouse-ear cress).